Here is a 438-residue protein sequence, read N- to C-terminus: Iroquois-class homeodomain protein IRX-6 (438 aa).

Positions 143 to 205 (SAGRRKNATR…NARRRLKKEN (63 aa)) form a DNA-binding region, homeobox. Disordered stretches follow at residues 205-270 (NKMT…EAAV) and 388-438 (PRDS…GAEG). Basic and acidic residues predominate over residues 214-223 (KGGEERKADS). A compositionally biased stretch (acidic residues) spans 252–268 (LEDLEEEEEEEEAEEEA).

The protein belongs to the TALE/IRO homeobox family. Expressed in a subset of retinal ganglion cells and bipolar cells; including in type 2 and type 3a bipolar cells.

The protein resides in the nucleus. Transcription factor. Binds to the iroquois binding site (IBS) motif of target genes to regulate gene expression; functions as a transcriptional activator or repressor. Modulates expression of RCVRN, VSX1, BHLHE22/BHLHB5 and TACR3/Nk3r. Required downstream of retinal bipolar cell specification for the terminal differentiation of type 2, type 3a and possibly type 6 bipolar cells. The chain is Iroquois-class homeodomain protein IRX-6 (Irx6) from Mus musculus (Mouse).